We begin with the raw amino-acid sequence, 621 residues long: Solute carrier family 2, facilitated glucose transporter member 12 (621 aa).

Residues Met-1–Ser-48 are Cytoplasmic-facing. The helical transmembrane segment at Val-49–Leu-69 threads the bilayer. Over Leu-70 to Glu-84 the chain is Extracellular. The chain crosses the membrane as a helical span at residues Met-85 to Ile-105. The Cytoplasmic portion of the chain corresponds to Asp-106–Cys-119. Residues Leu-120–Gly-140 form a helical membrane-spanning segment. A topological domain (extracellular) is located at residue Arg-141. A helical transmembrane segment spans residues Ile-142–Ile-162. The Cytoplasmic segment spans residues Ala-163 to Glu-176. A helical membrane pass occupies residues Leu-177–Phe-197. Over His-198–Lys-201 the chain is Extracellular. The chain crosses the membrane as a helical span at residues Tyr-202–Pro-222. At Pro-223–Arg-282 the chain is on the cytoplasmic side. The chain crosses the membrane as a helical span at residues Ile-283–Phe-303. The Extracellular portion of the chain corresponds to Tyr-304–Ser-321. Residues Leu-322 to Val-342 traverse the membrane as a helical segment. Residues Asp-343 to Thr-349 lie on the Cytoplasmic side of the membrane. The chain crosses the membrane as a helical span at residues Phe-350–Leu-370. Residues Asn-371–Ala-470 are Extracellular-facing. Residues Asn-375, Asn-387, Asn-400, and Asn-405 are each glycosylated (N-linked (GlcNAc...) asparagine). The helical transmembrane segment at Ser-471 to Leu-491 threads the bilayer. The Cytoplasmic segment spans residues Ser-492–Arg-502. Residues Ala-503–Leu-523 traverse the membrane as a helical segment. The Extracellular portion of the chain corresponds to Thr-524–Pro-532. The chain crosses the membrane as a helical span at residues Trp-533–Ile-553. At Pro-554–Asn-621 the chain is on the cytoplasmic side.

This sequence belongs to the major facilitator superfamily. Sugar transporter (TC 2.A.1.1) family. Glucose transporter subfamily.

It localises to the cell membrane. It is found in the endomembrane system. The protein resides in the cytoplasm. Its subcellular location is the perinuclear region. It carries out the reaction D-glucose(out) = D-glucose(in). In terms of biological role, insulin-independent facilitative glucose transporter. The polypeptide is Solute carrier family 2, facilitated glucose transporter member 12 (Macaca fascicularis (Crab-eating macaque)).